The primary structure comprises 216 residues: GTP-binding nuclear protein Ran, testis-specific isoform (216 aa).

Residue alanine 2 is modified to N-acetylalanine. The region spanning 7–171 (PQIQFKLVLV…FWLARKLIGD (165 aa)) is the Small GTPase Ran-type domain. Residue 17–24 (GDGGTGKT) coordinates GTP. Position 24 is a phosphothreonine (threonine 24). The interval 37-45 (KEYVATLGV) is switch-I. Lysine 60 is subject to N6-acetyllysine. Position 65–69 (65–69 (DTAGQ)) interacts with GTP. The interval 68–84 (GQEKFGGLRDGYYIQAQ) is switch-II. Lysine 71 is subject to N6-acetyllysine; alternate. Lysine 71 is covalently cross-linked (Glycyl lysine isopeptide (Lys-Gly) (interchain with G-Cter in SUMO2); alternate). Residue lysine 71 forms a Glycyl lysine isopeptide (Lys-Gly) (interchain with G-Cter in ubiquitin); alternate linkage. N6-acetyllysine is present on lysine 99. 122-125 (NKVD) provides a ligand contact to GTP. Lysine 134 bears the N6-acetyllysine mark. Lysine 152 is covalently cross-linked (Glycyl lysine isopeptide (Lys-Gly) (interchain with G-Cter in SUMO2)). Lysine 159 is modified (N6-acetyllysine; alternate). Position 159 is an N6-succinyllysine; alternate (lysine 159).

This sequence belongs to the small GTPase superfamily. Ran family. Testis specific.

The protein localises to the nucleus. The enzyme catalyses GTP + H2O = GDP + phosphate + H(+). GTP-binding protein involved in nucleocytoplasmic transport. Required for the import of protein into the nucleus and also for RNA export. Involved in chromatin condensation and control of cell cycle. The chain is GTP-binding nuclear protein Ran, testis-specific isoform (Rasl2-9) from Rattus norvegicus (Rat).